The following is a 543-amino-acid chain: UPF0324 membrane protein RB9488 (543 aa).

Residues 1–22 (MNSNTPSSDNSSPDNVSPDTSD) are compositionally biased toward low complexity. The segment at 1–41 (MNSNTPSSDNSSPDNVSPDTSDMASAGDDSALATPPPRPSL) is disordered. The helical transmembrane segment at 51–73 (WWAIWCAALLLLIAFAAVWIGQP) threads the bilayer. The disordered stretch occupies residues 91-120 (VETAPENAGPSAEAENEAIETENTAPAENA). A run of 11 helical transmembrane segments spans residues 160–182 (ISSSWSGILGVFLIIAALFAFAN), 189–211 (AGAFLAAFPVIFLLATLAYWMSG), 221–243 (EYALWALLVGLIISNTVGTPDFL), 270–292 (LALGLPGVFVAWLVTPVVLITTY), 307–329 (NMVISADMSVCGVSAAIATAAAC), 336–358 (LSLSIGLSLGFTVIMMAVMPAVI), 368–390 (GGAWLGGTIDSTGAVAAAGAVLG), 403–422 (IQNILIGVTAFCVAIYWVTF), 437–459 (IWYRFPKFVLGFVSMSILFSILY), 479–496 (TLRGWFFCLAFVSIGLET), and 511–533 (LVLYVCGQSLNLVLTLVMAYLMF).

The protein belongs to the UPF0324 family.

The protein localises to the cell membrane. The protein is UPF0324 membrane protein RB9488 of Rhodopirellula baltica (strain DSM 10527 / NCIMB 13988 / SH1).